We begin with the raw amino-acid sequence, 355 residues long: Peptide chain release factor 1 (355 aa).

Q232 carries the post-translational modification N5-methylglutamine.

It belongs to the prokaryotic/mitochondrial release factor family. Post-translationally, methylated by PrmC. Methylation increases the termination efficiency of RF1.

The protein resides in the cytoplasm. Functionally, peptide chain release factor 1 directs the termination of translation in response to the peptide chain termination codons UAG and UAA. The polypeptide is Peptide chain release factor 1 (Kineococcus radiotolerans (strain ATCC BAA-149 / DSM 14245 / SRS30216)).